We begin with the raw amino-acid sequence, 133 residues long: Peptide methionine sulfoxide reductase MsrB (133 aa).

The MsrB domain maps to 8–130; sequence LDVWRELLSD…NSASLRLKPR (123 aa). Residues Cys-47, Cys-50, Cys-96, and Cys-99 each coordinate Zn(2+). Cys-119 functions as the Nucleophile in the catalytic mechanism.

It belongs to the MsrB Met sulfoxide reductase family. Requires Zn(2+) as cofactor.

It catalyses the reaction L-methionyl-[protein] + [thioredoxin]-disulfide + H2O = L-methionyl-(R)-S-oxide-[protein] + [thioredoxin]-dithiol. The chain is Peptide methionine sulfoxide reductase MsrB from Azotobacter vinelandii (strain DJ / ATCC BAA-1303).